A 477-amino-acid chain; its full sequence is Ribulose bisphosphate carboxylase large chain (477 aa).

Residues 1-2 (MS) constitute a propeptide that is removed on maturation. P3 is modified (N-acetylproline). Substrate-binding residues include N123 and T173. The Proton acceptor role is filled by K175. K177 serves as a coordination point for substrate. 3 residues coordinate Mg(2+): K201, D203, and E204. K201 carries the post-translational modification N6-carboxylysine. The Proton acceptor role is filled by H294. 3 residues coordinate substrate: R295, H327, and S379.

The protein belongs to the RuBisCO large chain family. Type I subfamily. Heterohexadecamer of 8 large chains and 8 small chains; disulfide-linked. The disulfide link is formed within the large subunit homodimers. The cofactor is Mg(2+). In terms of processing, the disulfide bond which can form in the large chain dimeric partners within the hexadecamer appears to be associated with oxidative stress and protein turnover.

The protein resides in the plastid. Its subcellular location is the chloroplast. It catalyses the reaction 2 (2R)-3-phosphoglycerate + 2 H(+) = D-ribulose 1,5-bisphosphate + CO2 + H2O. The enzyme catalyses D-ribulose 1,5-bisphosphate + O2 = 2-phosphoglycolate + (2R)-3-phosphoglycerate + 2 H(+). Functionally, ruBisCO catalyzes two reactions: the carboxylation of D-ribulose 1,5-bisphosphate, the primary event in carbon dioxide fixation, as well as the oxidative fragmentation of the pentose substrate in the photorespiration process. Both reactions occur simultaneously and in competition at the same active site. This Lolium perenne (Perennial ryegrass) protein is Ribulose bisphosphate carboxylase large chain.